Consider the following 802-residue polypeptide: Penicillin G acylase (802 aa).

The N-terminal stretch at 1–24 (MKTKWLISVIILFVFIFPQNLVFA) is a signal peptide. Residue E177 participates in Ca(2+) binding. The propeptide at 235-265 (SAVIKASEKVGKERENFVQTSEELGLPLKIG) is spacer peptide. Catalysis depends on S266, which acts as the Nucleophile. Residue D341 participates in Ca(2+) binding.

It belongs to the peptidase S45 family. Heterodimer of an alpha subunit and a beta subunit processed from the same precursor. Ca(2+) is required as a cofactor.

The protein localises to the secreted. It carries out the reaction a penicillin + H2O = 6-aminopenicillanate + a carboxylate. The chain is Penicillin G acylase (pac) from Priestia megaterium (Bacillus megaterium).